Consider the following 247-residue polypeptide: 1-(5-phosphoribosyl)-5-[(5-phosphoribosylamino)methylideneamino] imidazole-4-carboxamide isomerase (247 aa).

Asp-8 serves as the catalytic Proton acceptor. Catalysis depends on Asp-129, which acts as the Proton donor.

This sequence belongs to the HisA/HisF family.

The protein resides in the cytoplasm. The enzyme catalyses 1-(5-phospho-beta-D-ribosyl)-5-[(5-phospho-beta-D-ribosylamino)methylideneamino]imidazole-4-carboxamide = 5-[(5-phospho-1-deoxy-D-ribulos-1-ylimino)methylamino]-1-(5-phospho-beta-D-ribosyl)imidazole-4-carboxamide. The protein operates within amino-acid biosynthesis; L-histidine biosynthesis; L-histidine from 5-phospho-alpha-D-ribose 1-diphosphate: step 4/9. The protein is 1-(5-phosphoribosyl)-5-[(5-phosphoribosylamino)methylideneamino] imidazole-4-carboxamide isomerase of Bradyrhizobium sp. (strain BTAi1 / ATCC BAA-1182).